We begin with the raw amino-acid sequence, 282 residues long: Acetylglutamate kinase (282 aa).

Substrate is bound by residues 62 to 63 (GG), Arg-84, and Asn-178.

It belongs to the acetylglutamate kinase family. ArgB subfamily.

It is found in the cytoplasm. It carries out the reaction N-acetyl-L-glutamate + ATP = N-acetyl-L-glutamyl 5-phosphate + ADP. Its pathway is amino-acid biosynthesis; L-arginine biosynthesis; N(2)-acetyl-L-ornithine from L-glutamate: step 2/4. Catalyzes the ATP-dependent phosphorylation of N-acetyl-L-glutamate. The sequence is that of Acetylglutamate kinase from Kosmotoga olearia (strain ATCC BAA-1733 / DSM 21960 / TBF 19.5.1).